Reading from the N-terminus, the 509-residue chain is Cobyric acid synthase (509 aa).

One can recognise a GATase cobBQ-type domain in the interval 262–459 (EIKVGIIKLP…IHGIFENDIW (198 aa)). The active-site Nucleophile is the C343. H451 is an active-site residue.

This sequence belongs to the CobB/CobQ family. CobQ subfamily.

It participates in cofactor biosynthesis; adenosylcobalamin biosynthesis. Its function is as follows. Catalyzes amidations at positions B, D, E, and G on adenosylcobyrinic A,C-diamide. NH(2) groups are provided by glutamine, and one molecule of ATP is hydrogenolyzed for each amidation. The polypeptide is Cobyric acid synthase (Prochlorococcus marinus (strain MIT 9312)).